Consider the following 88-residue polypeptide: Small ribosomal subunit protein bS16c (88 aa).

Belongs to the bacterial ribosomal protein bS16 family.

The protein localises to the plastid. It is found in the chloroplast. In Atropa belladonna (Belladonna), this protein is Small ribosomal subunit protein bS16c.